Reading from the N-terminus, the 317-residue chain is Protein CbxX, plasmid (317 aa).

ATP is bound at residue 85-92 (GNPGTGKT).

Belongs to the CbxX/CfxQ family.

In terms of biological role, seems to be necessary for the expression of RuBisCO. The sequence is that of Protein CbxX, plasmid (cbxXP) from Cupriavidus necator (strain ATCC 17699 / DSM 428 / KCTC 22496 / NCIMB 10442 / H16 / Stanier 337) (Ralstonia eutropha).